The chain runs to 106 residues: Small ribosomal subunit protein bS20 (106 aa).

Positions 1–20 are enriched in basic residues; the sequence is MATAKPKKKNPRLASGRKRV. Residues 1–21 form a disordered region; it reads MATAKPKKKNPRLASGRKRVR.

It belongs to the bacterial ribosomal protein bS20 family.

In terms of biological role, binds directly to 16S ribosomal RNA. The sequence is that of Small ribosomal subunit protein bS20 from Polaromonas naphthalenivorans (strain CJ2).